The primary structure comprises 302 residues: Ornithine carbamoyltransferase (302 aa).

Carbamoyl phosphate is bound by residues 52–55 (STRT), glutamine 79, arginine 103, and 130–133 (HPCQ). L-ornithine contacts are provided by residues asparagine 161, aspartate 221, and 225–226 (SM). Carbamoyl phosphate-binding positions include 261–262 (CL) and arginine 289.

The protein belongs to the aspartate/ornithine carbamoyltransferase superfamily. OTCase family.

The protein resides in the cytoplasm. The catalysed reaction is carbamoyl phosphate + L-ornithine = L-citrulline + phosphate + H(+). It functions in the pathway amino-acid biosynthesis; L-arginine biosynthesis; L-arginine from L-ornithine and carbamoyl phosphate: step 1/3. Its function is as follows. Reversibly catalyzes the transfer of the carbamoyl group from carbamoyl phosphate (CP) to the N(epsilon) atom of ornithine (ORN) to produce L-citrulline. The chain is Ornithine carbamoyltransferase from Syntrophotalea carbinolica (strain DSM 2380 / NBRC 103641 / GraBd1) (Pelobacter carbinolicus).